Reading from the N-terminus, the 136-residue chain is Large ribosomal subunit protein bL21 (136 aa).

It belongs to the bacterial ribosomal protein bL21 family. As to quaternary structure, part of the 50S ribosomal subunit. Contacts protein L20.

In terms of biological role, this protein binds to 23S rRNA in the presence of protein L20. In Trichodesmium erythraeum (strain IMS101), this protein is Large ribosomal subunit protein bL21.